Consider the following 187-residue polypeptide: Probable chorismate pyruvate-lyase (187 aa).

Residues Arg-80, Leu-118, and Glu-170 each coordinate substrate.

The protein belongs to the UbiC family.

It is found in the cytoplasm. The enzyme catalyses chorismate = 4-hydroxybenzoate + pyruvate. Its pathway is cofactor biosynthesis; ubiquinone biosynthesis. Removes the pyruvyl group from chorismate, with concomitant aromatization of the ring, to provide 4-hydroxybenzoate (4HB) for the ubiquinone pathway. The polypeptide is Probable chorismate pyruvate-lyase (Pseudomonas fluorescens (strain ATCC BAA-477 / NRRL B-23932 / Pf-5)).